Consider the following 478-residue polypeptide: 3-isopropylmalate dehydratase large subunit (478 aa).

Residues Cys-359, Cys-420, and Cys-423 each coordinate [4Fe-4S] cluster.

The protein belongs to the aconitase/IPM isomerase family. LeuC type 1 subfamily. In terms of assembly, heterodimer of LeuC and LeuD. [4Fe-4S] cluster serves as cofactor.

It catalyses the reaction (2R,3S)-3-isopropylmalate = (2S)-2-isopropylmalate. The protein operates within amino-acid biosynthesis; L-leucine biosynthesis; L-leucine from 3-methyl-2-oxobutanoate: step 2/4. Catalyzes the isomerization between 2-isopropylmalate and 3-isopropylmalate, via the formation of 2-isopropylmaleate. The polypeptide is 3-isopropylmalate dehydratase large subunit (Psychrobacter sp. (strain PRwf-1)).